A 268-amino-acid chain; its full sequence is Early nodulin-20 (268 aa).

Positions 1-24 are cleaved as a signal peptide; the sequence is MSSSSPILLMFIFSIWMLISYSES. One can recognise a Phytocyanin domain in the interval 25–129; sequence TDYLVGDSEN…GLKLAVVVMV (105 aa). Residue Asn-67 is glycosylated (N-linked (GlcNAc...) asparagine). Cys-83 and Cys-117 form a disulfide bridge. Composition is skewed to pro residues over residues 134 to 145 and 160 to 185; these read SSPPPPPSPPTP and PSPP…TPIP. Residues 134–253 form a disordered region; the sequence is SSPPPPPSPP…SGSKGGGAGH (120 aa). Positions 199–235 are enriched in low complexity; it reads PSLSKSPSPSESPSLAPSPSDSVASLAPSSSPSDESP. A lipid anchor (GPI-anchor amidated serine) is attached at Ser-243. The propeptide at 244–268 is removed in mature form; that stretch reads SGSKGGGAGHGFLEVSIAMMMFLIF.

The protein belongs to the early nodulin-like (ENODL) family.

It localises to the cell membrane. In terms of biological role, may act as a carbohydrate transporter. This is Early nodulin-20 from Medicago truncatula (Barrel medic).